The following is a 361-amino-acid chain: Hydroxycarboxylate dehydrogenase B (361 aa).

Residues His-48, Gly-122–Ile-124, Leu-178–Ala-182, His-234, Asn-270, and Gly-313–Glu-316 each bind NAD(+).

It belongs to the LDH2/MDH2 oxidoreductase family.

The catalysed reaction is 2-hydroxyglutarate + NADP(+) = 2-oxoglutarate + NADPH + H(+). It carries out the reaction 2-hydroxyglutarate + NAD(+) = 2-oxoglutarate + NADH + H(+). The enzyme catalyses 3-phenyllactate + NADP(+) = 3-phenylpyruvate + NADPH + H(+). It catalyses the reaction 3-phenyllactate + NAD(+) = 3-phenylpyruvate + NADH + H(+). The catalysed reaction is (2R)-2-hydroxy-3-(4-hydroxyphenyl)propanoate + NAD(+) = 3-(4-hydroxyphenyl)pyruvate + NADH + H(+). It carries out the reaction (2R)-2-hydroxy-3-(4-hydroxyphenyl)propanoate + NADP(+) = 3-(4-hydroxyphenyl)pyruvate + NADPH + H(+). The enzyme catalyses (2R)-3-(3,4-dihydroxyphenyl)lactate + NADP(+) = 3-(3,4-dihydroxyphenyl)pyruvate + NADPH + H(+). It catalyses the reaction (2R)-3-(3,4-dihydroxyphenyl)lactate + NAD(+) = 3-(3,4-dihydroxyphenyl)pyruvate + NADH + H(+). Catalyzes the NAD(P)H-dependent reduction of 2-oxoglutarate, phenylpyruvate and (4-hydroxyphenyl)pyruvate, leading to the respective 2-hydroxycarboxylate in vitro. Shows a preference for NADPH over NADH as a redox partner. Do not catalyze the reverse reactions. This Escherichia coli O157:H7 protein is Hydroxycarboxylate dehydrogenase B.